We begin with the raw amino-acid sequence, 389 residues long: Chalcone synthase 1 (389 aa).

Residue Cys-164 is part of the active site.

The protein belongs to the thiolase-like superfamily. Chalcone/stilbene synthases family.

The enzyme catalyses (E)-4-coumaroyl-CoA + 3 malonyl-CoA + 3 H(+) = 2',4,4',6'-tetrahydroxychalcone + 3 CO2 + 4 CoA. It participates in secondary metabolite biosynthesis; flavonoid biosynthesis. Its function is as follows. The primary product of this enzyme is 4,2',4',6'-tetrahydroxychalcone (also termed naringenin-chalcone or chalcone) which can under specific conditions spontaneously isomerize into naringenin. The polypeptide is Chalcone synthase 1 (CHS1) (Medicago sativa (Alfalfa)).